Here is a 332-residue protein sequence, read N- to C-terminus: Ornithine carbamoyltransferase 1, catabolic (332 aa).

Residues 56–59, glutamine 83, arginine 107, and 134–137 contribute to the carbamoyl phosphate site; these read STRT and HPTQ. Residues asparagine 167, aspartate 231, and 235 to 236 each bind L-ornithine; that span reads SM. Carbamoyl phosphate is bound by residues 273–274 and arginine 318; that span reads CL.

It belongs to the aspartate/ornithine carbamoyltransferase superfamily. OTCase family.

It is found in the cytoplasm. It catalyses the reaction carbamoyl phosphate + L-ornithine = L-citrulline + phosphate + H(+). Its pathway is amino-acid degradation; L-arginine degradation via ADI pathway; carbamoyl phosphate from L-arginine: step 2/2. Reversibly catalyzes the transfer of the carbamoyl group from carbamoyl phosphate (CP) to the N(epsilon) atom of ornithine (ORN) to produce L-citrulline. The polypeptide is Ornithine carbamoyltransferase 1, catabolic (arcB1) (Streptococcus agalactiae serotype III (strain NEM316)).